The primary structure comprises 453 residues: Gamma-glutamylpolyamine synthetase GlnA2 (453 aa).

Positions R15–G100 constitute a GS beta-grasp domain. The GS catalytic domain occupies P107–L453. Positions 130 and 132 each coordinate Mg(2+). An ATP-binding site is contributed by E182. 2 residues coordinate Mg(2+): E187 and E194. L-glutamate is bound at residue G239. A Mg(2+)-binding site is contributed by H243. ATP is bound at residue H245–S247. L-glutamate contacts are provided by R296, E310, and R322. ATP contacts are provided by R322 and R327. E342 contributes to the Mg(2+) binding site. Residue R344 coordinates L-glutamate.

Belongs to the glutamine synthetase family. Mg(2+) serves as cofactor.

It catalyses the reaction putrescine + L-glutamate + ATP = gamma-L-glutamylputrescine + ADP + phosphate + H(+). The catalysed reaction is spermine + L-glutamate + ATP = gamma-L-glutamylspermine + ADP + phosphate + H(+). The enzyme catalyses spermidine + L-glutamate + ATP = gamma-L-glutamylspermidine + ADP + phosphate + H(+). It carries out the reaction cadaverine + L-glutamate + ATP = gamma-L-glutamylcadaverine + ADP + phosphate + H(+). Its pathway is amine and polyamine degradation; putrescine degradation. The protein operates within amine and polyamine degradation; spermidine degradation. It participates in amine and polyamine degradation; spermine degradation. No effect on activity with glutamine synthetase (GS) inhibitor methionine sulfoximine (MSO). Involved in the catabolism of polyamines. Catalyzes the ATP-dependent gamma-glutamylation of polyamines. Substrates include putrescine, cadaverine, spermidine and spermine, with a preference for short-chain polyamine putrescine. No complementation of the L-glutamine auxotrophy of an E.coli glnA mutant. Together with GlnA3, enables survival of S.coelicolor under exposure to high local environmental polyamine concentrations, which is toxic to the cells. The polypeptide is Gamma-glutamylpolyamine synthetase GlnA2 (Streptomyces coelicolor (strain ATCC BAA-471 / A3(2) / M145)).